Reading from the N-terminus, the 297-residue chain is Acetyl-coenzyme A carboxylase carboxyl transferase subunit beta (297 aa).

The interval 1-23 is disordered; sequence MSWIERILGRTSSSSSSSKSKVP. In terms of domain architecture, CoA carboxyltransferase N-terminal spans 26–295; the sequence is VWTKCTSCEQ…PFKTAELIVE (270 aa). 4 residues coordinate Zn(2+): cysteine 30, cysteine 33, cysteine 49, and cysteine 52. A C4-type zinc finger spans residues 30-52; that stretch reads CTSCEQVLYSEELKRNMHVCPKC.

It belongs to the AccD/PCCB family. Acetyl-CoA carboxylase is a heterohexamer composed of biotin carboxyl carrier protein (AccB), biotin carboxylase (AccC) and two subunits each of ACCase subunit alpha (AccA) and ACCase subunit beta (AccD). The cofactor is Zn(2+).

It localises to the cytoplasm. It catalyses the reaction N(6)-carboxybiotinyl-L-lysyl-[protein] + acetyl-CoA = N(6)-biotinyl-L-lysyl-[protein] + malonyl-CoA. It functions in the pathway lipid metabolism; malonyl-CoA biosynthesis; malonyl-CoA from acetyl-CoA: step 1/1. Functionally, component of the acetyl coenzyme A carboxylase (ACC) complex. Biotin carboxylase (BC) catalyzes the carboxylation of biotin on its carrier protein (BCCP) and then the CO(2) group is transferred by the transcarboxylase to acetyl-CoA to form malonyl-CoA. The polypeptide is Acetyl-coenzyme A carboxylase carboxyl transferase subunit beta (Actinobacillus pleuropneumoniae serotype 3 (strain JL03)).